The following is a 91-amino-acid chain: YcgL domain-containing protein ETA_15380 (91 aa).

A YcgL domain is found at 1–85 (MFCVIYRSPQ…PLESLLKIHL (85 aa)).

In Erwinia tasmaniensis (strain DSM 17950 / CFBP 7177 / CIP 109463 / NCPPB 4357 / Et1/99), this protein is YcgL domain-containing protein ETA_15380.